The primary structure comprises 419 residues: UDP-N-acetylglucosamine 1-carboxyvinyltransferase (419 aa).

22–23 is a binding site for phosphoenolpyruvate; sequence KN. Residue arginine 91 coordinates UDP-N-acetyl-alpha-D-glucosamine. Residue cysteine 115 is the Proton donor of the active site. Cysteine 115 is subject to 2-(S-cysteinyl)pyruvic acid O-phosphothioketal. UDP-N-acetyl-alpha-D-glucosamine-binding positions include 120-124, 160-163, aspartate 305, and isoleucine 327; these read RPVDL and KVSV.

The protein belongs to the EPSP synthase family. MurA subfamily.

The protein resides in the cytoplasm. The catalysed reaction is phosphoenolpyruvate + UDP-N-acetyl-alpha-D-glucosamine = UDP-N-acetyl-3-O-(1-carboxyvinyl)-alpha-D-glucosamine + phosphate. The protein operates within cell wall biogenesis; peptidoglycan biosynthesis. In terms of biological role, cell wall formation. Adds enolpyruvyl to UDP-N-acetylglucosamine. This Cronobacter sakazakii (strain ATCC BAA-894) (Enterobacter sakazakii) protein is UDP-N-acetylglucosamine 1-carboxyvinyltransferase.